Here is a 304-residue protein sequence, read N- to C-terminus: Carbonic anhydrase 5A, mitochondrial (304 aa).

The transit peptide at Met-1 to Phe-34 directs the protein to the mitochondrion. The 261-residue stretch at Gln-35–Phe-295 folds into the Alpha-carbonic anhydrase domain. Residues His-129, His-131, and His-154 each contribute to the Zn(2+) site.

This sequence belongs to the alpha-carbonic anhydrase family. Zn(2+) is required as a cofactor. In terms of tissue distribution, high in liver, also detected in heart, lung, kidney, spleen and intestine.

The protein resides in the mitochondrion. The enzyme catalyses hydrogencarbonate + H(+) = CO2 + H2O. In terms of biological role, mitochondrial carbonic anhydrase that catalyzes the reversible conversion of carbon dioxide to bicarbonate/HCO3. Mitochondria are impermeable to HCO3, and thus this intramitochondrial carbonic anhydrase is pivotal in providing HCO3 for multiple mitochondrial enzymes that catalyze the formation of essential metabolites of intermediary metabolism in the urea and Krebs cycles. The polypeptide is Carbonic anhydrase 5A, mitochondrial (Rattus norvegicus (Rat)).